Here is an 87-residue protein sequence, read N- to C-terminus: Small ribosomal subunit protein uS15c (87 aa).

This sequence belongs to the universal ribosomal protein uS15 family. As to quaternary structure, part of the 30S ribosomal subunit.

It is found in the plastid. Its subcellular location is the chloroplast. The polypeptide is Small ribosomal subunit protein uS15c (rps15) (Oenothera argillicola (Appalachian evening primrose)).